We begin with the raw amino-acid sequence, 885 residues long: Eukaryotic translation initiation factor 3 subunit C (885 aa).

Residues 1–81 are disordered; sequence MSFFAKLQGS…SDSDDERQAV (81 aa). The span at 9-28 shows a compositional bias: low complexity; the sequence is GSDSESSSGSESEESILSGS. Residues 55-76 are compositionally biased toward acidic residues; it reads EESESEEESSDEDEEEMSDSDD. The 174-residue stretch at 624–797 folds into the PCI domain; the sequence is FHMHLNVELL…GVVIFHRVEQ (174 aa). The interval 822 to 885 is disordered; it reads LDVKLGNQGQ…TTMGRRVTAQ (64 aa). The span at 855 to 872 shows a compositional bias: gly residues; it reads RGTYRGRGGRGGRGGFNQ.

This sequence belongs to the eIF-3 subunit C family. As to quaternary structure, component of the eukaryotic translation initiation factor 3 (eIF-3) complex.

Its subcellular location is the cytoplasm. In terms of biological role, component of the eukaryotic translation initiation factor 3 (eIF-3) complex, which is involved in protein synthesis of a specialized repertoire of mRNAs and, together with other initiation factors, stimulates binding of mRNA and methionyl-tRNAi to the 40S ribosome. The eIF-3 complex specifically targets and initiates translation of a subset of mRNAs involved in cell proliferation. In Cryptococcus neoformans var. neoformans serotype D (strain B-3501A) (Filobasidiella neoformans), this protein is Eukaryotic translation initiation factor 3 subunit C.